A 1503-amino-acid chain; its full sequence is EF-hand calcium-binding domain-containing protein 5 (1503 aa).

A disordered region spans residues 1–23 (MNESASQEELRPAQENRKEDKER). Residues 8–23 (EELRPAQENRKEDKER) show a composition bias toward basic and acidic residues. The residue at position 77 (S77) is a Phosphoserine. Disordered regions lie at residues 477–518 (ASKT…EQGP), 544–656 (IEPG…QGPY), and 730–750 (FPET…KSQK). Polar residues predominate over residues 549 to 561 (HTESTLEQGSSRR). Basic and acidic residues-rich tracts occupy residues 562–582 (LLTE…HKGS) and 607–622 (GSRR…HKGS). Positions 869 to 904 (RQRLLLEAIFQKWDSDGSGFLDLKEVDELLYTYKEG) constitute an EF-hand domain. Ca(2+) is bound by residues D882, D884, S886, and E893.

The polypeptide is EF-hand calcium-binding domain-containing protein 5 (EFCAB5) (Homo sapiens (Human)).